Here is a 348-residue protein sequence, read N- to C-terminus: tRNA N6-adenosine threonylcarbamoyltransferase (348 aa).

Residues His-118 and His-122 each contribute to the Fe cation site. Substrate-binding positions include 140 to 144 (LVSGG), Asp-173, Gly-186, Asp-190, and Asn-279. Asp-309 serves as a coordination point for Fe cation.

Belongs to the KAE1 / TsaD family. It depends on Fe(2+) as a cofactor.

It is found in the cytoplasm. The catalysed reaction is L-threonylcarbamoyladenylate + adenosine(37) in tRNA = N(6)-L-threonylcarbamoyladenosine(37) in tRNA + AMP + H(+). Required for the formation of a threonylcarbamoyl group on adenosine at position 37 (t(6)A37) in tRNAs that read codons beginning with adenine. Is involved in the transfer of the threonylcarbamoyl moiety of threonylcarbamoyl-AMP (TC-AMP) to the N6 group of A37, together with TsaE and TsaB. TsaD likely plays a direct catalytic role in this reaction. This Lactiplantibacillus plantarum (strain ATCC BAA-793 / NCIMB 8826 / WCFS1) (Lactobacillus plantarum) protein is tRNA N6-adenosine threonylcarbamoyltransferase.